The sequence spans 207 residues: ATP phosphoribosyltransferase (207 aa).

Belongs to the ATP phosphoribosyltransferase family. Short subfamily. Heteromultimer composed of HisG and HisZ subunits.

It is found in the cytoplasm. The catalysed reaction is 1-(5-phospho-beta-D-ribosyl)-ATP + diphosphate = 5-phospho-alpha-D-ribose 1-diphosphate + ATP. It participates in amino-acid biosynthesis; L-histidine biosynthesis; L-histidine from 5-phospho-alpha-D-ribose 1-diphosphate: step 1/9. Functionally, catalyzes the condensation of ATP and 5-phosphoribose 1-diphosphate to form N'-(5'-phosphoribosyl)-ATP (PR-ATP). Has a crucial role in the pathway because the rate of histidine biosynthesis seems to be controlled primarily by regulation of HisG enzymatic activity. In Geobacillus kaustophilus (strain HTA426), this protein is ATP phosphoribosyltransferase.